A 642-amino-acid chain; its full sequence is MSKNQNHEEYQDDARPLTIEEQRARLRQLIIMGKERGYITYSEINDALPDDMSDADQIDNIVSMISGLGIQVTEHAPDAEDILLSDNAAVTDDDAVEEAEAALSSADSEFGRTTDPVRMYMREMGQVDLLTREDEIIIAKKIENALKNMVQAISACPGSIAEILELIEKICKDEIRVDEVVEAIIDPNEVLRNELGLGHLETTAPEKPSNDNSDENEDDEESEEDADEISAANLAELKQKVIGHFAQIEKDYKKMIGCLEKHHSRHKDYLAYRDAIANKLLEVRFATRQIDSLSSSLRGKVENIRKLEREIRDICLDRVHMERDYFIQNFLPEITNLQWIEEEIAKGRVWSNALDRFRHAILEKQTELADMEKETRISIEELKEINKNMVSSEKVSAAAKQEMIQANLRLVISIAKKYTNRGLQFLDLIQEGNIGLMKAVDKFEYRRGYKFSTYATWWIRQAITRSIADQARTIRIPVHMIETINKMNRISRQHLQETGEEPDSAKLAELMQMPEDKIRKIMKIAKEPISMETPIGDDDDSHLGDFIEDANNVAPADAAMYTSLHEVTKEILESLTPREAKVLRMRFGIDMNTDHTLEEVGRQFDVTRERIRQIEAKALRKLRHPTRSDRLRSFLDSEDSKL.

Residues 199–228 are disordered; it reads HLETTAPEKPSNDNSDENEDDEESEEDADE. Residues 212–228 are compositionally biased toward acidic residues; it reads NSDENEDDEESEEDADE. The tract at residues 403–473 is sigma-70 factor domain-2; the sequence is MIQANLRLVI…TRSIADQART (71 aa). Positions 427-430 match the Interaction with polymerase core subunit RpoC motif; it reads DLIQ. A sigma-70 factor domain-3 region spans residues 482-558; sequence ETINKMNRIS…DANNVAPADA (77 aa). The tract at residues 571–624 is sigma-70 factor domain-4; that stretch reads ILESLTPREAKVLRMRFGIDMNTDHTLEEVGRQFDVTRERIRQIEAKALRKLRH. A DNA-binding region (H-T-H motif) is located at residues 597-616; sequence LEEVGRQFDVTRERIRQIEA.

The protein belongs to the sigma-70 factor family. RpoD/SigA subfamily. In terms of assembly, interacts transiently with the RNA polymerase catalytic core.

It localises to the cytoplasm. In terms of biological role, sigma factors are initiation factors that promote the attachment of RNA polymerase to specific initiation sites and are then released. This sigma factor is the primary sigma factor during exponential growth. This is RNA polymerase sigma factor RpoD from Neisseria gonorrhoeae.